Reading from the N-terminus, the 285-residue chain is Diphthine methyl ester synthase (285 aa).

S-adenosyl-L-methionine contacts are provided by residues Leu9, Asp84, Gly87, 112–113 (SI), and Leu163. The residue at position 171 (Ser171) is a Phosphoserine. S-adenosyl-L-methionine-binding residues include Val225 and His250.

This sequence belongs to the diphthine synthase family.

It carries out the reaction 2-[(3S)-amino-3-carboxypropyl]-L-histidyl-[translation elongation factor 2] + 4 S-adenosyl-L-methionine = diphthine methyl ester-[translation elongation factor 2] + 4 S-adenosyl-L-homocysteine + 3 H(+). It functions in the pathway protein modification; peptidyl-diphthamide biosynthesis. Functionally, S-adenosyl-L-methionine-dependent methyltransferase that catalyzes four methylations of the modified target histidine residue in translation elongation factor 2 (EF-2), to form an intermediate called diphthine methyl ester. The four successive methylation reactions represent the second step of diphthamide biosynthesis. This chain is Diphthine methyl ester synthase (DPH5), found in Homo sapiens (Human).